The chain runs to 180 residues: Large ribosomal subunit protein uL18m (180 aa).

This sequence belongs to the universal ribosomal protein uL18 family. In terms of assembly, component of the mitochondrial large ribosomal subunit (mt-LSU). Mature mammalian 55S mitochondrial ribosomes consist of a small (28S) and a large (39S) subunit. The 28S small subunit contains a 12S ribosomal RNA (12S mt-rRNA) and 30 different proteins. The 39S large subunit contains a 16S rRNA (16S mt-rRNA), a copy of mitochondrial valine transfer RNA (mt-tRNA(Val)), which plays an integral structural role, and 52 different proteins.

It is found in the mitochondrion. Functionally, together with thiosulfate sulfurtransferase (TST), acts as a mitochondrial import factor for the cytosolic 5S rRNA. The precursor form shows RNA chaperone activity; is able to fold the 5S rRNA into an import-competent conformation that is recognized by rhodanese (TST). Both the cytoplasmic and mitochondrial forms are able to bind to the helix IV-loop D in the gamma domain of the 5S rRNA. This chain is Large ribosomal subunit protein uL18m (MRPL18), found in Homo sapiens (Human).